The primary structure comprises 43 residues: uncharacterized protein (43 aa).

The first 16 residues, 1-16, serve as a signal peptide directing secretion; sequence MKLLNFILIIFNALKS. Asn37 carries N-linked (GlcNAc...) asparagine; by host glycosylation.

This is an uncharacterized protein from Acheta domesticus (House cricket).